The primary structure comprises 215 residues: 3-demethoxyubiquinol 3-hydroxylase (215 aa).

The Fe cation site is built by glutamate 64, glutamate 94, histidine 97, glutamate 146, glutamate 178, and histidine 181.

It belongs to the COQ7 family. Requires Fe cation as cofactor.

The protein resides in the cell membrane. It carries out the reaction a 5-methoxy-2-methyl-3-(all-trans-polyprenyl)benzene-1,4-diol + AH2 + O2 = a 3-demethylubiquinol + A + H2O. The protein operates within cofactor biosynthesis; ubiquinone biosynthesis. In terms of biological role, catalyzes the hydroxylation of 2-nonaprenyl-3-methyl-6-methoxy-1,4-benzoquinol during ubiquinone biosynthesis. This Bordetella avium (strain 197N) protein is 3-demethoxyubiquinol 3-hydroxylase.